We begin with the raw amino-acid sequence, 136 residues long: Large ribosomal subunit protein eL27A (136 aa).

Belongs to the eukaryotic ribosomal protein eL27 family. As to quaternary structure, component of the large ribosomal subunit (LSU). Mature yeast ribosomes consist of a small (40S) and a large (60S) subunit. The 40S small subunit contains 1 molecule of ribosomal RNA (18S rRNA) and at least 33 different proteins. The large 60S subunit contains 3 rRNA molecules (25S, 5.8S and 5S rRNA) and at least 46 different proteins.

It is found in the cytoplasm. It localises to the nucleus. Functionally, component of the ribosome, a large ribonucleoprotein complex responsible for the synthesis of proteins in the cell. The small ribosomal subunit (SSU) binds messenger RNAs (mRNAs) and translates the encoded message by selecting cognate aminoacyl-transfer RNA (tRNA) molecules. The large subunit (LSU) contains the ribosomal catalytic site termed the peptidyl transferase center (PTC), which catalyzes the formation of peptide bonds, thereby polymerizing the amino acids delivered by tRNAs into a polypeptide chain. The nascent polypeptides leave the ribosome through a tunnel in the LSU and interact with protein factors that function in enzymatic processing, targeting, and the membrane insertion of nascent chains at the exit of the ribosomal tunnel. In Schizosaccharomyces pombe (strain 972 / ATCC 24843) (Fission yeast), this protein is Large ribosomal subunit protein eL27A (rpl2701).